The following is a 125-amino-acid chain: Photoactive yellow protein (125 aa).

Positions 23–86 (LDGLAFGAIQ…GKFKEGVASG (64 aa)) constitute a PAS domain. Cys69 is subject to S-(4-hydroxycinnamyl)cysteine.

Belongs to the photoactive yellow protein family. Monomer. The 4-hydroxycinnamic acid (p-coumaric acid) chromophore is covalently bound via a thioester linkage.

Its function is as follows. Photoactive blue light protein. Probably functions as a photoreceptor for a negative phototaxis response. This is Photoactive yellow protein (pyp) from Halorhodospira halophila (Ectothiorhodospira halophila).